Consider the following 262-residue polypeptide: Ribosomal RNA small subunit methyltransferase A (262 aa).

6 residues coordinate S-adenosyl-L-methionine: N14, L16, G41, E62, D87, and N109.

This sequence belongs to the class I-like SAM-binding methyltransferase superfamily. rRNA adenine N(6)-methyltransferase family. RsmA subfamily.

It localises to the cytoplasm. The enzyme catalyses adenosine(1518)/adenosine(1519) in 16S rRNA + 4 S-adenosyl-L-methionine = N(6)-dimethyladenosine(1518)/N(6)-dimethyladenosine(1519) in 16S rRNA + 4 S-adenosyl-L-homocysteine + 4 H(+). Specifically dimethylates two adjacent adenosines (A1518 and A1519) in the loop of a conserved hairpin near the 3'-end of 16S rRNA in the 30S particle. May play a critical role in biogenesis of 30S subunits. In Francisella tularensis subsp. holarctica (strain FTNF002-00 / FTA), this protein is Ribosomal RNA small subunit methyltransferase A.